Here is a 48-residue protein sequence, read N- to C-terminus: Large ribosomal subunit protein bL36c (48 aa).

This sequence belongs to the bacterial ribosomal protein bL36 family.

The protein resides in the plastid. The protein localises to the chloroplast. The protein is Large ribosomal subunit protein bL36c of Rhodomonas salina (Cryptomonas salina).